The following is a 104-amino-acid chain: SOSS complex subunit C (104 aa).

Alanine 2 carries the N-acetylalanine modification. At serine 50 the chain carries Phosphoserine.

Belongs to the SOSS-C family. In terms of assembly, component of the SOSS complex, composed of SOSS-B (SOSS-B1/NABP2 or SOSS-B2/NABP1), SOSS-A/INTS3 and SOSS-C/INIP. SOSS complexes containing SOSS-B1/NABP2 are more abundant than complexes containing SOSS-B2/NABP1. Interacts with INTS3; the interaction is direct.

The protein resides in the nucleus. Component of the SOSS complex, a multiprotein complex that functions downstream of the MRN complex to promote DNA repair and G2/M checkpoint. The SOSS complex associates with single-stranded DNA at DNA lesions and influences diverse endpoints in the cellular DNA damage response including cell-cycle checkpoint activation, recombinational repair and maintenance of genomic stability. Required for efficient homologous recombination-dependent repair of double-strand breaks (DSBs) and ATM-dependent signaling pathways. The chain is SOSS complex subunit C (Inip) from Mus musculus (Mouse).